Consider the following 349-residue polypeptide: Bifunctional protein FolKE (349 aa).

The interval 1–226 (MQTTYLSMGS…LFEIDSSKND (226 aa)) is 2-amino-4-hydroxy-6-hydroxymethyldihydropteridine pyrophosphokinase. The interval 226-349 (DSIVLIKDIP…KRMEFLESLL (124 aa)) is GTP cyclohydrolase 1.

It in the N-terminal section; belongs to the HPPK family. In the C-terminal section; belongs to the GTP cyclohydrolase I family. As to quaternary structure, homomer.

The enzyme catalyses 6-hydroxymethyl-7,8-dihydropterin + ATP = (7,8-dihydropterin-6-yl)methyl diphosphate + AMP + H(+). It carries out the reaction GTP + H2O = 7,8-dihydroneopterin 3'-triphosphate + formate + H(+). It functions in the pathway cofactor biosynthesis; 7,8-dihydroneopterin triphosphate biosynthesis; 7,8-dihydroneopterin triphosphate from GTP: step 1/1. It participates in cofactor biosynthesis; tetrahydrofolate biosynthesis; 2-amino-4-hydroxy-6-hydroxymethyl-7,8-dihydropteridine diphosphate from 7,8-dihydroneopterin triphosphate: step 4/4. The chain is Bifunctional protein FolKE (folKE) from Lactococcus lactis subsp. cremoris (strain MG1363).